A 945-amino-acid chain; its full sequence is Isoleucine--tRNA ligase (945 aa).

The short motif at 66 to 76 is the 'HIGH' region element; it reads PYANGDIHLGH. Glu581 provides a ligand contact to L-isoleucyl-5'-AMP. The 'KMSKS' region motif lies at 622 to 626; it reads KMSKS. Position 625 (Lys625) interacts with ATP. 4 residues coordinate Zn(2+): Cys908, Cys911, Cys928, and Cys931.

Belongs to the class-I aminoacyl-tRNA synthetase family. IleS type 1 subfamily. In terms of assembly, monomer. It depends on Zn(2+) as a cofactor.

It is found in the cytoplasm. It carries out the reaction tRNA(Ile) + L-isoleucine + ATP = L-isoleucyl-tRNA(Ile) + AMP + diphosphate. In terms of biological role, catalyzes the attachment of isoleucine to tRNA(Ile). As IleRS can inadvertently accommodate and process structurally similar amino acids such as valine, to avoid such errors it has two additional distinct tRNA(Ile)-dependent editing activities. One activity is designated as 'pretransfer' editing and involves the hydrolysis of activated Val-AMP. The other activity is designated 'posttransfer' editing and involves deacylation of mischarged Val-tRNA(Ile). This Burkholderia cenocepacia (strain HI2424) protein is Isoleucine--tRNA ligase.